Consider the following 153-residue polypeptide: FAD synthase (153 aa).

Residues 9-10 (TF), 14-17 (HPGH), and Asp92 contribute to the ATP site.

The protein belongs to the archaeal FAD synthase family. As to quaternary structure, homodimer. A divalent metal cation is required as a cofactor.

The catalysed reaction is FMN + ATP + H(+) = FAD + diphosphate. Its pathway is cofactor biosynthesis; FAD biosynthesis; FAD from FMN: step 1/1. Functionally, catalyzes the transfer of the AMP portion of ATP to flavin mononucleotide (FMN) to produce flavin adenine dinucleotide (FAD) coenzyme. The polypeptide is FAD synthase (Halorubrum lacusprofundi (strain ATCC 49239 / DSM 5036 / JCM 8891 / ACAM 34)).